Here is a 106-residue protein sequence, read N- to C-terminus: UPF0060 membrane protein CHU_3331 (106 aa).

4 consecutive transmembrane segments (helical) span residues 5–25, 31–51, 59–79, and 85–105; these read FYFI…WLHF, ALLL…LTKI, AYAV…YGIE, and IWDY…LFAP.

It belongs to the UPF0060 family.

Its subcellular location is the cell inner membrane. The protein is UPF0060 membrane protein CHU_3331 of Cytophaga hutchinsonii (strain ATCC 33406 / DSM 1761 / CIP 103989 / NBRC 15051 / NCIMB 9469 / D465).